A 191-amino-acid chain; its full sequence is Orotate phosphoribosyltransferase (191 aa).

114-122 contacts 5-phospho-alpha-D-ribose 1-diphosphate; that stretch reads EDVITTGGS. Residues threonine 118 and arginine 146 each contribute to the orotate site.

The protein belongs to the purine/pyrimidine phosphoribosyltransferase family. PyrE subfamily. Homodimer. Mg(2+) is required as a cofactor.

It catalyses the reaction orotidine 5'-phosphate + diphosphate = orotate + 5-phospho-alpha-D-ribose 1-diphosphate. The protein operates within pyrimidine metabolism; UMP biosynthesis via de novo pathway; UMP from orotate: step 1/2. In terms of biological role, catalyzes the transfer of a ribosyl phosphate group from 5-phosphoribose 1-diphosphate to orotate, leading to the formation of orotidine monophosphate (OMP). The sequence is that of Orotate phosphoribosyltransferase from Caldicellulosiruptor saccharolyticus (strain ATCC 43494 / DSM 8903 / Tp8T 6331).